Reading from the N-terminus, the 1604-residue chain is Putative surface cell antigen sca2 (1604 aa).

The signal sequence occupies residues 1–33 (MSLQNSHSKKYVLTFFMSTCLLTSSFLSTSARA). 3 disordered regions span residues 324-354 (TTKP…RTKP), 554-603 (NVNN…SNPN), and 1183-1240 (QQEN…KSLL). Residues 554–564 (NVNNNSNKGQN) show a composition bias toward low complexity. Residues 568–587 (ILPPTPPLNGSMPPSPPPPL) show a composition bias toward pro residues. Composition is skewed to basic and acidic residues over residues 1193–1213 (SSTK…KSDS) and 1227–1240 (SKND…KSLL). The Autotransporter domain occupies 1325 to 1604 (EASINRGVWI…QGLIKLKVNL (280 aa)).

The protein resides in the cell outer membrane. The chain is Putative surface cell antigen sca2 (sca2) from Rickettsia felis (strain ATCC VR-1525 / URRWXCal2) (Rickettsia azadi).